The chain runs to 24 residues: GIKDWIKGAAKKLIKTVASHIANQ.

In terms of tissue distribution, expressed by the skin glands.

It is found in the secreted. Antimicrobial peptide. Synthetic peptide shows higher potency against Gram-negative bacteria than against Gram-positive bacteria. Has a very week hemolytic activity. The polypeptide is Ascaphin-5 (Ascaphus truei (Coastal tailed frog)).